Reading from the N-terminus, the 213-residue chain is ATP-dependent Clp protease proteolytic subunit 1 (213 aa).

The Nucleophile role is filled by Ser-114. The active site involves His-139.

Belongs to the peptidase S14 family. Fourteen ClpP subunits assemble into 2 heptameric rings which stack back to back to give a disk-like structure with a central cavity, resembling the structure of eukaryotic proteasomes.

Its subcellular location is the cytoplasm. The catalysed reaction is Hydrolysis of proteins to small peptides in the presence of ATP and magnesium. alpha-casein is the usual test substrate. In the absence of ATP, only oligopeptides shorter than five residues are hydrolyzed (such as succinyl-Leu-Tyr-|-NHMec, and Leu-Tyr-Leu-|-Tyr-Trp, in which cleavage of the -Tyr-|-Leu- and -Tyr-|-Trp bonds also occurs).. Functionally, cleaves peptides in various proteins in a process that requires ATP hydrolysis. Has a chymotrypsin-like activity. Plays a major role in the degradation of misfolded proteins. The chain is ATP-dependent Clp protease proteolytic subunit 1 from Pseudomonas aeruginosa (strain ATCC 15692 / DSM 22644 / CIP 104116 / JCM 14847 / LMG 12228 / 1C / PRS 101 / PAO1).